A 156-amino-acid polypeptide reads, in one-letter code: Snaclec rhinocetin subunit alpha (156 aa).

An N-terminal signal peptide occupies residues 1-23 (MGRFIFLSSGWLVVFLSLSGTGA). Disulfide bonds link C27–C38, C55–C150, and C125–C142. Positions 34–151 (YEGHCYKFFF…CGDNYPFVCM (118 aa)) constitute a C-type lectin domain.

This sequence belongs to the snaclec family. In terms of assembly, heterodimer; disulfide-linked. As to expression, expressed by the venom gland.

It localises to the secreted. Functionally, antagonist of the alpha-2 subunit of the integrin alpha-2/beta-1 (ITGA2/ITGB1) on human platelets and endothelial cells. This protein inhibits collagen-stimulated activation of human platelets in a dose-dependent manner. In addition, it antagonizes the binding of monoclonal antibodies against the alpha-2 subunit of integrin alpha-2/beta-1 to platelets and it coimmunoprecipitates with this integrin. In Bitis rhinoceros (West African gaboon viper), this protein is Snaclec rhinocetin subunit alpha.